The primary structure comprises 400 residues: Large envelope protein (400 aa).

M1 is subject to N-acetylmethionine. G2 carries the N-myristoyl glycine; by host lipid modification. The interval 2–119 is pre-S1; sequence GGWSSKHRKG…PPLRDTHPQA (118 aa). Positions 2–174 are pre-S; the sequence is GGWSSKHRKG…FTKTGDPASN (173 aa). The Virion surface; in external conformation segment spans residues 2 to 181; that stretch reads GGWSSKHRKG…ASNMESTTSG (180 aa). Residues 2–253 are Intravirion; in internal conformation-facing; it reads GGWSSKHRKG…PGYRWMCLRR (252 aa). W4 carries N-linked (GlcNAc...) asparagine glycosylation. Residues 89 to 117 form a disordered region; the sequence is PAAPPPASTNRQSGRQPTPISPPLRDTHP. Positions 96 to 106 are enriched in polar residues; sequence STNRQSGRQPT. The tract at residues 120–174 is pre-S2; that stretch reads MQWNSTAFHQALQDPRVRGLYFPAGGSSSGTVNPVPNTVSHISSIFTKTGDPASN. The chain crosses the membrane as a helical span at residues 182–202; it reads FLGPLLVLQAGFFLLTRILTI. The Intravirion; in external conformation segment spans residues 203–253; the sequence is PQSLDSWWTSLNFLGGAPGCIGQNSQSQTSNHSPTSCPPTCPGYRWMCLRR. Residues 254–274 traverse the membrane as a helical segment; the sequence is FIIFLFILLLCLIFLLVLLDY. Over 275 to 348 the chain is Virion surface; sequence QGMLPVCPLL…WASVRFSWLS (74 aa). The N-linked (GlcNAc...) asparagine; by host glycan is linked to N320. The chain crosses the membrane as a helical span at residues 349 to 369; the sequence is LLVPFVQWFAGLSPTVWLSVI. The Intravirion segment spans residues 370-375; sequence WMIWYW. A helical membrane pass occupies residues 376–398; sequence GPSLYNILSPFLPLLPIFLCLWV. At 399 to 400 the chain is on the virion surface side; the sequence is YI.

The protein belongs to the orthohepadnavirus major surface antigen family. As to quaternary structure, in its internal form (Li-HBsAg), interacts with the capsid protein and with the isoform S. Interacts with host chaperone CANX. In terms of assembly, associates with host chaperone CANX through its pre-S2 N glycan; this association may be essential for isoform M proper secretion. Interacts with isoform L. Interacts with the antigens of satellite virus HDV (HDVAgs); this interaction is required for encapsidation of HDV genomic RNA. Post-translationally, isoform M is N-terminally acetylated by host at a ratio of 90%, and N-glycosylated by host at the pre-S2 region. In terms of processing, myristoylated.

Its subcellular location is the virion membrane. In terms of biological role, the large envelope protein exists in two topological conformations, one which is termed 'external' or Le-HBsAg and the other 'internal' or Li-HBsAg. In its external conformation the protein attaches the virus to cell receptors and thereby initiating infection. This interaction determines the species specificity and liver tropism. This attachment induces virion internalization predominantly through caveolin-mediated endocytosis. The large envelope protein also assures fusion between virion membrane and endosomal membrane. In its internal conformation the protein plays a role in virion morphogenesis and mediates the contact with the nucleocapsid like a matrix protein. The middle envelope protein plays an important role in the budding of the virion. It is involved in the induction of budding in a nucleocapsid independent way. In this process the majority of envelope proteins bud to form subviral lipoprotein particles of 22 nm of diameter that do not contain a nucleocapsid. This chain is Large envelope protein, found in Homo sapiens (Human).